Here is a 346-residue protein sequence, read N- to C-terminus: S-adenosylmethionine:tRNA ribosyltransferase-isomerase (346 aa).

The protein belongs to the QueA family. Monomer.

The protein localises to the cytoplasm. It carries out the reaction 7-aminomethyl-7-carbaguanosine(34) in tRNA + S-adenosyl-L-methionine = epoxyqueuosine(34) in tRNA + adenine + L-methionine + 2 H(+). It functions in the pathway tRNA modification; tRNA-queuosine biosynthesis. Functionally, transfers and isomerizes the ribose moiety from AdoMet to the 7-aminomethyl group of 7-deazaguanine (preQ1-tRNA) to give epoxyqueuosine (oQ-tRNA). This is S-adenosylmethionine:tRNA ribosyltransferase-isomerase from Neisseria meningitidis serogroup C (strain 053442).